The following is a 501-amino-acid chain: Glycerol kinase (501 aa).

Residue Thr-12 participates in ADP binding. Residues Thr-12, Thr-13, and Ser-14 each coordinate ATP. Thr-12 contributes to the sn-glycerol 3-phosphate binding site. Arg-16 is a binding site for ADP. The sn-glycerol 3-phosphate site is built by Arg-82, Glu-83, Tyr-134, and Asp-244. Residues Arg-82, Glu-83, Tyr-134, Asp-244, and Gln-245 each contribute to the glycerol site. ADP is bound by residues Thr-266 and Gly-310. Residues Thr-266, Gly-310, Gln-314, and Gly-411 each coordinate ATP. ADP-binding residues include Gly-411 and Asn-415.

Belongs to the FGGY kinase family.

The enzyme catalyses glycerol + ATP = sn-glycerol 3-phosphate + ADP + H(+). Its pathway is polyol metabolism; glycerol degradation via glycerol kinase pathway; sn-glycerol 3-phosphate from glycerol: step 1/1. Its activity is regulated as follows. Inhibited by fructose 1,6-bisphosphate (FBP). Its function is as follows. Key enzyme in the regulation of glycerol uptake and metabolism. Catalyzes the phosphorylation of glycerol to yield sn-glycerol 3-phosphate. This is Glycerol kinase from Methylorubrum populi (strain ATCC BAA-705 / NCIMB 13946 / BJ001) (Methylobacterium populi).